A 160-amino-acid polypeptide reads, in one-letter code: H/ACA ribonucleoprotein complex subunit 2-like protein (160 aa).

It belongs to the eukaryotic ribosomal protein eL8 family. As to quaternary structure, component of the small nucleolar ribonucleoprotein particle containing H/ACA-type snoRNAs (H/ACA snoRNPs).

It is found in the nucleus. It localises to the nucleolus. Functionally, required for ribosome biogenesis. Part of a complex which catalyzes pseudouridylation of rRNA. This involves the isomerization of uridine such that the ribose is subsequently attached to C5, instead of the normal N1. Pseudouridine ('psi') residues may serve to stabilize the conformation of rRNAs. The sequence is that of H/ACA ribonucleoprotein complex subunit 2-like protein (NHP2) from Drosophila yakuba (Fruit fly).